The primary structure comprises 470 residues: MNGTEPAEPTNGTNATAWPAGLLLAYYGDDFTGSTDAMEAMQAAGVPTVLCLQKPTPELLARFPEVRCVGMAGSSRGRSSAWMDDELPDVLASLAALGAPILQYKVCSTFDSSPEVGSIGRAIDIGVRHMPGNWSPMVIGAPRLKRYQMFGNLFAAVDGVGYRLDRHPTMSRHPVTPMNEADLRLHLARQTARRIELIDMLELRGADVATRVRALCAPDMPVVLIDVLDEETLAEAGRLVWEQRGEGIFTASSSGLQYALAAHWRARGLLPPTPSLPAADPVQAIAAVSGSCSPVTAAQIGWARAHGFHTERLDLPRALDSRDGAAEIERVVTAATQALTRGISVIVHSAEGPDDPAVTGFDAIASAAGFARHDAARKVGRALAEVMRRLLDSVELTRVVVAGGDSSGEVASVLGIDALSVMAGLVPGAPLCRAWSAEPRRDGLQIVLKGGQIGDATFFGMVREGRLAGA.

2 residues coordinate substrate: Asp-30 and Arg-78. Residues Ser-291, 403–406 (GGDS), and Gly-451 each bind ATP.

The protein belongs to the four-carbon acid sugar kinase family.

It carries out the reaction 3-oxoisoapionate + ATP = 3-oxoisoapionate 4-phosphate + ADP + H(+). Its pathway is carbohydrate metabolism. In terms of biological role, involved in catabolism of D-apiose. Catalyzes the phosphorylation of 3-oxo-isoapionate to 3-oxo-isoapionate 4-phosphate. The chain is 3-oxo-isoapionate kinase from Paraburkholderia graminis (strain ATCC 700544 / DSM 17151 / LMG 18924 / NCIMB 13744 / C4D1M).